A 255-amino-acid polypeptide reads, in one-letter code: Pyrroloquinoline-quinone synthase (255 aa).

It belongs to the PqqC family.

The enzyme catalyses 6-(2-amino-2-carboxyethyl)-7,8-dioxo-1,2,3,4,7,8-hexahydroquinoline-2,4-dicarboxylate + 3 O2 = pyrroloquinoline quinone + 2 H2O2 + 2 H2O + H(+). Its pathway is cofactor biosynthesis; pyrroloquinoline quinone biosynthesis. Functionally, ring cyclization and eight-electron oxidation of 3a-(2-amino-2-carboxyethyl)-4,5-dioxo-4,5,6,7,8,9-hexahydroquinoline-7,9-dicarboxylic-acid to PQQ. The protein is Pyrroloquinoline-quinone synthase of Cereibacter sphaeroides (strain ATCC 17023 / DSM 158 / JCM 6121 / CCUG 31486 / LMG 2827 / NBRC 12203 / NCIMB 8253 / ATH 2.4.1.) (Rhodobacter sphaeroides).